The sequence spans 336 residues: 3-isopropylmalate dehydrogenase (336 aa).

Residues arginine 87, arginine 97, arginine 121, and aspartate 211 each coordinate substrate. Residues aspartate 211, aspartate 235, and aspartate 239 each contribute to the Mg(2+) site. Glycine 271–aspartate 283 contributes to the NAD(+) binding site.

It belongs to the isocitrate and isopropylmalate dehydrogenases family. LeuB type 2 subfamily. Homodimer. Mg(2+) is required as a cofactor. The cofactor is Mn(2+).

Its subcellular location is the cytoplasm. It catalyses the reaction (2R,3S)-3-isopropylmalate + NAD(+) = 4-methyl-2-oxopentanoate + CO2 + NADH. It functions in the pathway amino-acid biosynthesis; L-leucine biosynthesis; L-leucine from 3-methyl-2-oxobutanoate: step 3/4. Catalyzes the oxidation of 3-carboxy-2-hydroxy-4-methylpentanoate (3-isopropylmalate) to 3-carboxy-4-methyl-2-oxopentanoate. The product decarboxylates to 4-methyl-2 oxopentanoate. The chain is 3-isopropylmalate dehydrogenase from Rhodococcus jostii (strain RHA1).